We begin with the raw amino-acid sequence, 209 residues long: Ubiquitin-conjugating enzyme E2 S (209 aa).

A UBC core domain is found at 14-160 (QTIRQVMREL…ARMMTEIHAQ (147 aa)). Cys98 serves as the catalytic Glycyl thioester intermediate. A disordered region spans residues 162–209 (AKCGAGAHGDDKDDDGPSTKKHAGLDKKLQDKKKEKLLKEKKRMLKRL). Residues 169–199 (HGDDKDDDGPSTKKHAGLDKKLQDKKKEKLL) show a composition bias toward basic and acidic residues. Over residues 200-209 (KEKKRMLKRL) the composition is skewed to basic residues.

The protein belongs to the ubiquitin-conjugating enzyme family.

It carries out the reaction S-ubiquitinyl-[E1 ubiquitin-activating enzyme]-L-cysteine + [E2 ubiquitin-conjugating enzyme]-L-cysteine = [E1 ubiquitin-activating enzyme]-L-cysteine + S-ubiquitinyl-[E2 ubiquitin-conjugating enzyme]-L-cysteine.. Its pathway is protein modification; protein ubiquitination. In terms of biological role, catalyzes the covalent attachment of ubiquitin to other proteins. Acts as an essential factor of the anaphase promoting complex/cyclosome (APC/C), a cell cycle-regulated ubiquitin ligase that controls progression through mitosis. Acts by specifically elongating polyubiquitin chains initiated by the E2 enzyme vih/UbcH10 on APC/C substrates, enhancing the degradation of APC/C substrates by the proteasome and promoting mitotic exit. This is Ubiquitin-conjugating enzyme E2 S from Drosophila erecta (Fruit fly).